The following is a 258-amino-acid chain: Alpha-hydroxynitrile lyase (258 aa).

Active-site proton donor/acceptor residues include Ser-81 and His-236.

It belongs to the AB hydrolase superfamily. Hydroxynitrile lyase family. Homodimer.

The enzyme catalyses (R)-mandelonitrile = benzaldehyde + hydrogen cyanide. In terms of biological role, involved in cyanogenesis, the release of HCN from injured tissues. Displays R-selective hydroxynitrile lyase activity. Also accepts nitromethane (MeNO2) as a donor in a reaction with aromatic aldehydes to yield (R)-beta-nitro alcohols. This chain is Alpha-hydroxynitrile lyase, found in Arabidopsis thaliana (Mouse-ear cress).